A 686-amino-acid chain; its full sequence is X-linked interleukin-1 receptor accessory protein-like 2 (686 aa).

The first 16 residues, 1–16, serve as a signal peptide directing secretion; that stretch reads MKPPFLLALVVCSVVS. The Extracellular segment spans residues 17–354; sequence TNLKMVSKRN…LLRKKDLIYK (338 aa). An Ig-like C2-type 1 domain is found at 18–132; that stretch reads NLKMVSKRNS…YCMKVSMSLT (115 aa). A disulfide bond links Cys53 and Cys116. Asn63, Asn120, Asn136, Asn211, and Asn328 each carry an N-linked (GlcNAc...) asparagine glycan. Ig-like C2-type domains are found at residues 141–232 and 239–347; these read CYNS…LKVT and PPKP…VLLR. Intrachain disulfides connect Cys162–Cys214 and Cys265–Cys331. Residues 355 to 375 traverse the membrane as a helical segment; that stretch reads IELAGGLGAIFLLLVLLVVIY. Over 376 to 686 the chain is Cytoplasmic; sequence KCYNIELMLF…KELSFTSDIW (311 aa). Positions 400–556 constitute a TIR domain; the sequence is KEYDAYLSYT…KFWKHLVYEM (157 aa). Glu488 is an active-site residue.

It belongs to the interleukin-1 receptor family. As to expression, detected at low levels in fetal and adult brain, in particular in the frontal lobe, temporal lobe and cerebellum. Detected at very low levels in skin, liver, fetal ovary and in placenta.

It is found in the membrane. The enzyme catalyses NAD(+) + H2O = ADP-D-ribose + nicotinamide + H(+). In Homo sapiens (Human), this protein is X-linked interleukin-1 receptor accessory protein-like 2 (IL1RAPL2).